Here is a 789-residue protein sequence, read N- to C-terminus: Fibrinogen alpha chain (789 aa).

An N-terminal signal peptide occupies residues 1 to 19 (MLSLRVTCLILSVASTVWT). Ser46 bears the Phosphoserine mark. A coiled-coil region spans residues 69-554 (CRMKGLIDEA…GRARARPTRD (486 aa)). Basic and acidic residues-rich tracts occupy residues 263-287 (ERPG…RGDF) and 384-396 (KGDK…KEKV). Residues 263-420 (ERPGKDGGSR…TITKTVTGPD (158 aa)) form a disordered region. Residues 397-416 (TSSGTSTTHRSCSKTITKTV) are compositionally biased toward polar residues. Cys408 and Cys438 are joined by a disulfide. Position 447 is a phosphoserine (Ser447). At Pro504 the chain carries 4-hydroxyproline; by P4HA1. Residues 526–541 (ADEAGSEAHREGETRN) show a composition bias toward basic and acidic residues. The tract at residues 526–555 (ADEAGSEAHREGETRNTKRGRARARPTRDC) is disordered. The region spanning 546–787 (RARARPTRDC…AVRMKIRPLV (242 aa)) is the Fibrinogen C-terminal domain. N-linked (GlcNAc...) asparagine glycosylation is present at Asn609. Asp714, Asp716, Trp718, and Glu720 together coordinate Ca(2+). Cys722 and Cys735 are joined by a disulfide.

As to quaternary structure, heterohexamer; disulfide linked. Contains 2 sets of 3 non-identical chains (alpha, beta and gamma). The 2 heterotrimers are in head to head conformation with the N-termini in a small central domain. Post-translationally, conversion of fibrinogen to fibrin is triggered by thrombin, which cleaves fibrinopeptides A and B from alpha and beta chains, and thus exposes the N-terminal polymerization sites responsible for the formation of the soft clot. The soft clot is converted into the hard clot by factor XIIIA which catalyzes the epsilon-(gamma-glutamyl)lysine cross-linking between gamma chains (stronger) and between alpha chains (weaker) of different monomers. Forms F13A-mediated cross-links between a glutamine and the epsilon-amino group of a lysine residue, forming fibronectin-fibrinogen heteropolymers. In terms of processing, phosphorylated by FAM20C in the extracellular medium. As to expression, expressed in liver.

The protein resides in the secreted. In terms of biological role, cleaved by the protease thrombin to yield monomers which, together with fibrinogen beta (FGB) and fibrinogen gamma (FGG), polymerize to form an insoluble fibrin matrix. Fibrin has a major function in hemostasis as one of the primary components of blood clots. In addition, functions during the early stages of wound repair to stabilize the lesion and guide cell migration during re-epithelialization. Was originally thought to be essential for platelet aggregation, based on in vitro studies using anticoagulated blood. However, subsequent studies have shown that it is not absolutely required for thrombus formation in vivo. Enhances expression of SELP in activated platelets via an ITGB3-dependent pathway. Maternal fibrinogen is essential for successful pregnancy. Fibrin deposition is also associated with infection, where it protects against IFNG-mediated hemorrhage. May also facilitate the immune response via both innate and T-cell mediated pathways. In Mus musculus (Mouse), this protein is Fibrinogen alpha chain.